The sequence spans 944 residues: MFKKLLGDPNTRKLKRYFPLVSDVNIFEEDLLSLSDDDLRTRTSEFRSKLEKVSSPNEELSLLDELLPEAFAVVREASKRVLGMRHFDVQLIGGMVLHEGQIAEMKTGEGKTLVATLPSYLNALTGRGVHVVTVNDYLARRDAEWMGQIHRFLGLSVGLVQQSMAPLERKKNYECDITYATNSELGFDYLRDNMAADKSEIVQRDFQFCVIDEVDSILIDEARTPLIISGQVERSQEKYKQAAQVVENLKRAIDTSKDGIDPEGDYEVDEKQRSCILTDEGFANTEKLLNVQDLFDPKEPWAHYVTNALKAKELFIKDVNYIVRNDEAVIVDEFTGRVMPGRRWSDGQHQAIEAKENLSIQPETQTLASITYQNFFLLYPRLSGMTGTAKTEEVEFEKTYKLQTTVVPTNRKISRQDWVDQVFKTEAAKWRAVAKETADIHQKGRPVLVGTTSVEKSELLSTLLSEQQVPHNLLNAKPENVEREAEIVAQAGRAGAVTIATNMAGRGTDIILGGNSDYMARLKIKEILSNRLVKPEEGHKPPVSPQRKTKSAGFKEEKNKNLSISKQNQSKSFLNIFPVSLTEDTDAKLASLASKLVKEWGDRSLSSIELDDYIATAAEKTPTQDKNIKELRIAIQLIKNEYEEVLSQEETNVRRVGGLHVIGTERHESRRVDNQLRGRAGRQGDLGSTRFFLSLEDNLLRIFGGDRVAGLMNAFRVEEDMPIESGMLTRSLEGAQKKVETYYYDIRKQIFEYDEVMNNQRKAVYSERRRVLDGRELKLQVIGYGQRTMEEIVEAYVNEDLPPEEWNLTNLVSKVKEFIYLLEDLKPEDLLGLNKNELKDFLKEQLRNAYDMKEAKVEQSHPGIMRQAERFFILQQLDTLWREHLQSMDSLKESVGLRGYGQKDPLIEYKNEGYDMFLEMMVNMRRNVIYSMFMFQPAQKKVEA.

ATP-binding positions include glutamine 90, 108-112 (GEGKT), and aspartate 509. The interval 533–565 (VKPEEGHKPPVSPQRKTKSAGFKEEKNKNLSIS) is disordered.

Belongs to the SecA family. As to quaternary structure, monomer and homodimer. Part of the essential Sec protein translocation apparatus which comprises SecA, SecYEG and auxiliary proteins SecDF. Other proteins may also be involved.

It localises to the cell inner membrane. The protein resides in the cellular thylakoid membrane. Its subcellular location is the cytoplasm. The catalysed reaction is ATP + H2O + cellular proteinSide 1 = ADP + phosphate + cellular proteinSide 2.. In terms of biological role, part of the Sec protein translocase complex. Interacts with the SecYEG preprotein conducting channel. Has a central role in coupling the hydrolysis of ATP to the transfer of proteins into and across the cell membrane, serving as an ATP-driven molecular motor driving the stepwise translocation of polypeptide chains across the membrane. Functionally, probably participates in protein translocation into and across both the cytoplasmic and thylakoid membranes in cyanobacterial cells. The polypeptide is Protein translocase subunit SecA (Prochlorococcus marinus (strain NATL1A)).